The following is a 197-amino-acid chain: Prefoldin subunit 3 (197 aa).

Residue A2 is modified to N-acetylalanine. N6-acetyllysine is present on K59.

The protein belongs to the prefoldin subunit alpha family. In terms of assembly, heterohexamer of two PFD-alpha type and four PFD-beta type subunits. Binds to the C-terminal part of VHL. As to expression, ubiquitous.

The protein localises to the cytoplasm. It is found in the nucleus. Binds specifically to cytosolic chaperonin (c-CPN) and transfers target proteins to it. Binds to nascent polypeptide chain and promotes folding in an environment in which there are many competing pathways for nonnative proteins. This Homo sapiens (Human) protein is Prefoldin subunit 3 (VBP1).